The sequence spans 253 residues: Retinoic acid early-inducible protein 1-beta (253 aa).

The signal sequence occupies residues 1–28 (MAKAAVTKRHHFMIQKLLILLSYGYTNG). An intrachain disulfide couples Cys-37 to Cys-56. Residues Asn-38, Asn-70, Asn-83, Asn-143, and Asn-156 are each glycosylated (N-linked (GlcNAc...) asparagine). Cys-90 and Cys-190 are joined by a disulfide. The disordered stretch occupies residues 198 to 230 (LKQSKEKPRSTSRSPSITQLTSTSPLPPPSHST). Over residues 211-221 (SPSITQLTSTS) the composition is skewed to low complexity. A lipid anchor (GPI-anchor amidated serine) is attached at Ser-229. Positions 230–253 (TSKKGFISVGLIFISLLFAFAFAM) are cleaved as a propeptide — removed in mature form.

Belongs to the NKG2D ligand family. In terms of processing, glycosylated. Expressed predominantly in embryonic brain.

The protein resides in the cell membrane. Acts as a ligand for KLRK1. This chain is Retinoic acid early-inducible protein 1-beta (Raet1b), found in Mus musculus (Mouse).